Reading from the N-terminus, the 353-residue chain is Ornithine racemase (353 aa).

The active-site Proton acceptor is the lysine 35. Lysine 35 is subject to N6-(pyridoxal phosphate)lysine. Arginine 128 provides a ligand contact to substrate.

Belongs to the alanine racemase family. In terms of assembly, homodimer. Requires pyridoxal 5'-phosphate as cofactor.

The catalysed reaction is L-ornithine = D-ornithine. Involved in the ornithine fermentation pathway. Catalyzes the conversion of L-ornithine to D-ornithine. OR could also racemize basic amino acids such as lysine and arginine. Serine, asparagine and alanine could be also converted by OR, but at a lower rate. This chain is Ornithine racemase, found in Acetoanaerobium sticklandii (strain ATCC 12662 / DSM 519 / JCM 1433 / CCUG 9281 / NCIMB 10654 / HF) (Clostridium sticklandii).